Consider the following 258-residue polypeptide: Aspartate/glutamate leucyltransferase (258 aa).

This sequence belongs to the R-transferase family. Bpt subfamily.

It localises to the cytoplasm. It catalyses the reaction N-terminal L-glutamyl-[protein] + L-leucyl-tRNA(Leu) = N-terminal L-leucyl-L-glutamyl-[protein] + tRNA(Leu) + H(+). The catalysed reaction is N-terminal L-aspartyl-[protein] + L-leucyl-tRNA(Leu) = N-terminal L-leucyl-L-aspartyl-[protein] + tRNA(Leu) + H(+). Functions in the N-end rule pathway of protein degradation where it conjugates Leu from its aminoacyl-tRNA to the N-termini of proteins containing an N-terminal aspartate or glutamate. The polypeptide is Aspartate/glutamate leucyltransferase (Rhizobium leguminosarum bv. trifolii (strain WSM2304)).